The sequence spans 265 residues: 4-hydroxy-tetrahydrodipicolinate reductase (265 aa).

9 to 14 (GPRGRM) is an NAD(+) binding site. R37 is an NADP(+) binding site. Residues 98–100 (GTT) and 124–127 (APNF) contribute to the NAD(+) site. The Proton donor/acceptor role is filled by H154. H155 is a binding site for (S)-2,3,4,5-tetrahydrodipicolinate. The Proton donor role is filled by K158. 164-165 (GT) contributes to the (S)-2,3,4,5-tetrahydrodipicolinate binding site.

The protein belongs to the DapB family.

It localises to the cytoplasm. The catalysed reaction is (S)-2,3,4,5-tetrahydrodipicolinate + NAD(+) + H2O = (2S,4S)-4-hydroxy-2,3,4,5-tetrahydrodipicolinate + NADH + H(+). The enzyme catalyses (S)-2,3,4,5-tetrahydrodipicolinate + NADP(+) + H2O = (2S,4S)-4-hydroxy-2,3,4,5-tetrahydrodipicolinate + NADPH + H(+). It functions in the pathway amino-acid biosynthesis; L-lysine biosynthesis via DAP pathway; (S)-tetrahydrodipicolinate from L-aspartate: step 4/4. In terms of biological role, catalyzes the conversion of 4-hydroxy-tetrahydrodipicolinate (HTPA) to tetrahydrodipicolinate. In Geobacillus kaustophilus (strain HTA426), this protein is 4-hydroxy-tetrahydrodipicolinate reductase.